We begin with the raw amino-acid sequence, 198 residues long: MTGYFLPPQTSSYTFRFAKVDDSAILSVGGNVAFECCAQEQPPITSTDFTINGIKPWQGSLPDNIGGTVYMYAGYYYPLKVVYSNAVSWGTLPISVELPDGTTVSDDFEGYVYSFDDDLSQSNCTIPDPSKHTTSIVTTTTELWTGTFTSTSTEMTTVTGTNGQPTDETVIVAKAPTTATSSSLSSSSSEQITSSITS.

The 110-residue stretch at M1–G110 folds into the PA14 domain.

This sequence belongs to the flocculin family.

This is an uncharacterized protein from Saccharomyces cerevisiae (strain ATCC 204508 / S288c) (Baker's yeast).